We begin with the raw amino-acid sequence, 721 residues long: Pentatricopeptide repeat-containing protein At3g49710 (721 aa).

14 PPR repeats span residues 42–72 (STYL…TEEP), 73–103 (NVFS…IPQP), 104–138 (DTVS…GFEV), 139–169 (DGFT…SGGF), 172–202 (YSSV…MDEL), 204–238 (DEVS…GFKI), 239–273 (DMFT…GFHQ), 274–307 (NSHV…ILSP), 308–343 (DLVV…GHRP), 344–378 (DDCS…HIPS), 380–410 (RISV…MPEL), 411–445 (NAVS…GIAP), 446–476 (NKIT…MKET), and 482–512 (EAEH…MPYK). The type E motif stretch occupies residues 517-592 (AWAALLGACR…KPGCSWIEVK (76 aa)). The interval 593 to 623 (KKKHVFVAEDWSHPMIREVNEYLEEMMKKMK) is type E(+) motif. Residues 624 to 721 (KVGYVMDKKW…DGKCSCGDYW (98 aa)) are type DYW motif.

This sequence belongs to the PPR family. PCMP-H subfamily.

This chain is Pentatricopeptide repeat-containing protein At3g49710 (PCMP-H79), found in Arabidopsis thaliana (Mouse-ear cress).